Reading from the N-terminus, the 346-residue chain is NADH-quinone oxidoreductase subunit H (346 aa).

The next 8 helical transmembrane spans lie at 6–26, 76–96, 128–148, 166–186, 198–218, 260–280, 289–309, and 324–344; these read ILFW…ACAY, IMYL…WSVV, ILFL…AGWA, ISYE…TGSL, LWNI…VAMF, ITMS…PFGI, LFGL…FVWV, and LGWK…SLYI.

The protein belongs to the complex I subunit 1 family. As to quaternary structure, NDH-1 is composed of 14 different subunits. Subunits NuoA, H, J, K, L, M, N constitute the membrane sector of the complex.

It localises to the cell inner membrane. It carries out the reaction a quinone + NADH + 5 H(+)(in) = a quinol + NAD(+) + 4 H(+)(out). Functionally, NDH-1 shuttles electrons from NADH, via FMN and iron-sulfur (Fe-S) centers, to quinones in the respiratory chain. The immediate electron acceptor for the enzyme in this species is believed to be ubiquinone. Couples the redox reaction to proton translocation (for every two electrons transferred, four hydrogen ions are translocated across the cytoplasmic membrane), and thus conserves the redox energy in a proton gradient. This subunit may bind ubiquinone. In Leptospira borgpetersenii serovar Hardjo-bovis (strain JB197), this protein is NADH-quinone oxidoreductase subunit H.